The following is a 426-amino-acid chain: Histidine--tRNA ligase (426 aa).

This sequence belongs to the class-II aminoacyl-tRNA synthetase family. Homodimer.

The protein resides in the cytoplasm. It carries out the reaction tRNA(His) + L-histidine + ATP = L-histidyl-tRNA(His) + AMP + diphosphate + H(+). The protein is Histidine--tRNA ligase of Prochlorococcus marinus (strain MIT 9312).